Consider the following 37-residue polypeptide: Large ribosomal subunit protein bL36 (37 aa).

It belongs to the bacterial ribosomal protein bL36 family.

This chain is Large ribosomal subunit protein bL36, found in Chromohalobacter salexigens (strain ATCC BAA-138 / DSM 3043 / CIP 106854 / NCIMB 13768 / 1H11).